The sequence spans 530 residues: Purine-cytosine permease FCY22 (530 aa).

Residue Thr-46 is modified to Phosphothreonine. Transmembrane regions (helical) follow at residues Met-96–Gly-116, Val-119–Phe-139, Phe-162–Ser-182, Cys-197–Gly-217, Val-220–Ile-240, Gly-263–Ala-283, Ile-298–Ala-318, Ala-345–Leu-365, Val-372–Ile-392, Val-396–Phe-416, Gly-418–Ala-438, and Leu-463–Gly-483.

Belongs to the purine-cytosine permease (2.A.39) family.

The protein localises to the membrane. Functionally, probable purine-cytosine permease. The chain is Purine-cytosine permease FCY22 (FCY22) from Saccharomyces cerevisiae (strain ATCC 204508 / S288c) (Baker's yeast).